The primary structure comprises 727 residues: Engulfment and cell motility protein 1 (727 aa).

Y18 is subject to Phosphotyrosine; by HCK. Residues K100 and K105 each carry the N6-acetyllysine modification. The residue at position 216 (Y216) is a Phosphotyrosine; by HCK. Residues 319–492 (AQRDIIFELR…VVKEQVMRAL (174 aa)) enclose the ELMO domain. Residue S344 is modified to Phosphoserine. Phosphotyrosine; by HCK occurs at positions 395 and 511. A PH domain is found at 555 to 676 (RLVEGTCFRK…DGLNALLGKD (122 aa)). Positions 707–714 (PDAPPPIP) match the SH3-binding motif. Y720 carries the post-translational modification Phosphotyrosine; by HCK.

In terms of assembly, interacts directly with the SH3-domain of DOCK1 via its SH3-binding site. Probably forms a heterotrimeric complex with DOCK1 and RAC1. Interacts with PLEKHG6. Interacts with HCK (via SH3 domain). Interacts with ADGRB1. Interacts with ADGRB3. Interacts with DOCK5. In terms of processing, phosphorylated by HCK.

It localises to the cytoplasm. Its subcellular location is the cell membrane. Involved in cytoskeletal rearrangements required for phagocytosis of apoptotic cells and cell motility. Acts in association with DOCK1 and CRK. Was initially proposed to be required in complex with DOCK1 to activate Rac Rho small GTPases. May enhance the guanine nucleotide exchange factor (GEF) activity of DOCK1. This Mus musculus (Mouse) protein is Engulfment and cell motility protein 1 (Elmo1).